The sequence spans 78 residues: Putative DPH3 homolog B (78 aa).

The region spanning 4-60 is the DPH-type MB domain; the sequence is FHDEVEIEDFQYDEDSETYFCPCPCGDNFSITKEELENGEGVAMCPGCSLIIKVIYD. The Zn(2+) site is built by cysteine 26, cysteine 28, cysteine 48, and cysteine 51.

It belongs to the DPH3 family.

The chain is Putative DPH3 homolog B (DPH3P1) from Homo sapiens (Human).